Reading from the N-terminus, the 197-residue chain is MNIIGLTGGIASGKSTVSRILERLGAVVIDADQLAREAVMPGTSAHRSIVAAFGEGILLPDGAIDRKALGSIIFADSSARKRLEAITHPAIRDLAELRLAELRRSGVPVAVYMAALLIEAGATDRVDEVWVVYVDRETQVRRVMARDGLSRSEAEQRLAAQMPMEEKAARGQVVIDNNGTPEELERRIEEIWAKRFP.

A DPCK domain is found at I3–P197. Position 11-16 (A11–T16) interacts with ATP.

This sequence belongs to the CoaE family.

The protein localises to the cytoplasm. The enzyme catalyses 3'-dephospho-CoA + ATP = ADP + CoA + H(+). It participates in cofactor biosynthesis; coenzyme A biosynthesis; CoA from (R)-pantothenate: step 5/5. Catalyzes the phosphorylation of the 3'-hydroxyl group of dephosphocoenzyme A to form coenzyme A. This Geobacter sulfurreducens (strain ATCC 51573 / DSM 12127 / PCA) protein is Dephospho-CoA kinase.